Reading from the N-terminus, the 403-residue chain is Sex hormone-binding globulin (403 aa).

Positions 1 to 30 are cleaved as a signal peptide; that stretch reads MEKGEVASLRCRLLLLLLLLTLPPTHQGRT. Laminin G-like domains lie at 46–218 and 225–391; these read KYLS…LGNC and GLFF…THSC. An intrachain disulfide couples C194 to C218. N274 is a glycosylation site (N-linked (GlcNAc...) asparagine). Cysteines 363 and 391 form a disulfide. N-linked (GlcNAc...) asparagine glycosylation occurs at N397.

As to quaternary structure, homodimer. In terms of tissue distribution, isoform 2 is only expressed in the liver.

Its subcellular location is the secreted. Functionally, functions as an androgen transport protein, but may also be involved in receptor mediated processes. Each dimer binds one molecule of steroid. Specific for 5-alpha-dihydrotestosterone, testosterone, and 17-beta-estradiol. Regulates the plasma metabolic clearance rate of steroid hormones by controlling their plasma concentration. The protein is Sex hormone-binding globulin (Shbg) of Rattus norvegicus (Rat).